Reading from the N-terminus, the 289-residue chain is Testis-expressed protein 26 (289 aa).

The interval 1-26 is disordered; it reads MEQPGPRAPDPSLCHHNLQPTDDPNW. 5 mn regions span residues 30–42, 69–83, 144–157, 179–193, and 233–247; these read ATTMRTAFTPKTG, QTQYSDEYTWKSHSK, ISLTKRDFVDRSKA, DTEFRRNYQIPAKIP, and QTTYQSDYDKTYPDF.

The protein is Testis-expressed protein 26 (TEX26) of Homo sapiens (Human).